The chain runs to 282 residues: Virginiamycin B lyase (282 aa).

Histidine 217 serves as a coordination point for substrate. Glutamate 256 lines the Mg(2+) pocket. The Proton acceptor role is filled by histidine 258. Glutamate 273 contributes to the Mg(2+) binding site.

It belongs to the Vgb family. Monomer. Mg(2+) serves as cofactor.

Inactivates the type B streptogramin antibiotics by linearizing the lactone ring at the ester linkage, generating a free phenylglycine carboxylate and converting the threonyl moiety into 2-amino-butenoic acid. This Mycolicibacterium smegmatis (strain ATCC 700084 / mc(2)155) (Mycobacterium smegmatis) protein is Virginiamycin B lyase.